A 1490-amino-acid polypeptide reads, in one-letter code: DNA-directed RNA polymerase subunit beta' (1490 aa).

Zn(2+) contacts are provided by Cys-67, Cys-69, Cys-82, and Cys-85. Asp-499, Asp-501, and Asp-503 together coordinate Mg(2+). Zn(2+)-binding residues include Cys-868, Cys-944, Cys-951, and Cys-954.

Belongs to the RNA polymerase beta' chain family. The RNAP catalytic core consists of 2 alpha, 1 beta, 1 beta' and 1 omega subunit. When a sigma factor is associated with the core the holoenzyme is formed, which can initiate transcription. Requires Mg(2+) as cofactor. Zn(2+) is required as a cofactor.

The enzyme catalyses RNA(n) + a ribonucleoside 5'-triphosphate = RNA(n+1) + diphosphate. Functionally, DNA-dependent RNA polymerase catalyzes the transcription of DNA into RNA using the four ribonucleoside triphosphates as substrates. In Chlorobaculum tepidum (strain ATCC 49652 / DSM 12025 / NBRC 103806 / TLS) (Chlorobium tepidum), this protein is DNA-directed RNA polymerase subunit beta'.